The chain runs to 302 residues: tRNA demethylase abh1 (302 aa).

Substrate is bound by residues Trp142 and 149 to 151 (YDW). The Fe2OG dioxygenase domain occupies 187-299 (KAEAAIVNFY…RVNFNVRQVR (113 aa)). 194–196 (NFY) serves as a coordination point for 2-oxoglutarate. His205 and Asp207 together coordinate Fe cation. Arg235 contributes to the substrate binding site. Residue His261 participates in Fe cation binding. 290–296 (RVNFNVR) lines the 2-oxoglutarate pocket.

The protein belongs to the alkB family. Fe(2+) is required as a cofactor.

It localises to the cytoplasm. It is found in the nucleus. The catalysed reaction is an N(1)-methyladenosine in tRNA + 2-oxoglutarate + O2 = an adenosine in tRNA + formaldehyde + succinate + CO2. The enzyme catalyses N(1)-methyladenosine(58) in tRNA + 2-oxoglutarate + O2 = adenosine(58) in tRNA + formaldehyde + succinate + CO2. In terms of biological role, dioxygenase that acts as on nucleic acids, such as DNA and tRNA. Requires molecular oxygen, alpha-ketoglutarate and iron. Mainly acts as a tRNA demethylase by removing N(1)-methyladenine from various tRNAs, with a preference for N(1)-methyladenine at position 58 (m1A58) present on a stem loop structure of tRNAs. Acts as a regulator of translation initiation and elongation. Does not appear to possess DNA repair activity; no activity towards methylated DNA or etheno adducts. Exhibits a weak and unstable DNA lyase activity; this activity is probably not biologically significant and proceeds by a mechanism different from the classical dioxygenase reaction as it does not require 2-oxoglutarate or iron. The sequence is that of tRNA demethylase abh1 (abh1) from Schizosaccharomyces pombe (strain 972 / ATCC 24843) (Fission yeast).